The chain runs to 466 residues: tRNA modification GTPase MnmE (466 aa).

Positions 23, 86, and 125 each coordinate (6S)-5-formyl-5,6,7,8-tetrahydrofolate. Positions 221 to 388 (GIPVAIVGEP…LKNELLSFVN (168 aa)) constitute a TrmE-type G domain. Position 231 (N231) interacts with K(+). Residues 231–236 (NVGKST), 250–256 (SDIAGTT), and 275–278 (DTAG) contribute to the GTP site. S235 is a binding site for Mg(2+). K(+) is bound by residues S250, I252, and T255. A Mg(2+)-binding site is contributed by T256. K466 serves as a coordination point for (6S)-5-formyl-5,6,7,8-tetrahydrofolate.

It belongs to the TRAFAC class TrmE-Era-EngA-EngB-Septin-like GTPase superfamily. TrmE GTPase family. In terms of assembly, homodimer. Heterotetramer of two MnmE and two MnmG subunits. K(+) is required as a cofactor.

It localises to the cytoplasm. Its function is as follows. Exhibits a very high intrinsic GTPase hydrolysis rate. Involved in the addition of a carboxymethylaminomethyl (cmnm) group at the wobble position (U34) of certain tRNAs, forming tRNA-cmnm(5)s(2)U34. This Flavobacterium johnsoniae (strain ATCC 17061 / DSM 2064 / JCM 8514 / BCRC 14874 / CCUG 350202 / NBRC 14942 / NCIMB 11054 / UW101) (Cytophaga johnsonae) protein is tRNA modification GTPase MnmE.